The chain runs to 249 residues: Chymase (249 aa).

The first 19 residues, 1–19, serve as a signal peptide directing secretion; sequence MHCLPLTLLLLLLCSRAEA. Residues 20–21 constitute a propeptide, activation peptide; the sequence is EE. In terms of domain architecture, Peptidase S1 spans 22-245; it reads IIGGTESKPH…YRPWINKVLK (224 aa). Cysteines 51 and 67 form a disulfide. Catalysis depends on charge relay system residues histidine 66 and aspartate 110. 2 cysteine pairs are disulfide-bonded: cysteine 144-cysteine 209 and cysteine 175-cysteine 188. Serine 203 acts as the Charge relay system in catalysis.

This sequence belongs to the peptidase S1 family. Granzyme subfamily.

Its subcellular location is the secreted. It localises to the cytoplasmic granule. It carries out the reaction Preferential cleavage: Phe-|-Xaa &gt; Tyr-|-Xaa &gt; Trp-|-Xaa &gt; Leu-|-Xaa.. In terms of biological role, major secreted protease of mast cells with suspected roles in vasoactive peptide generation, extracellular matrix degradation, and regulation of gland secretion. This Canis lupus familiaris (Dog) protein is Chymase (CMA1).